A 226-amino-acid polypeptide reads, in one-letter code: Orotidine 5'-phosphate decarboxylase (226 aa).

Residues Asp9, Lys31, 58–67 (DLKLYDIPNT), Thr115, Arg176, Gln184, Gly204, and Arg205 contribute to the substrate site. Residue Lys60 is the Proton donor of the active site.

The protein belongs to the OMP decarboxylase family. Type 1 subfamily. As to quaternary structure, homodimer.

It carries out the reaction orotidine 5'-phosphate + H(+) = UMP + CO2. It participates in pyrimidine metabolism; UMP biosynthesis via de novo pathway; UMP from orotate: step 2/2. In terms of biological role, catalyzes the decarboxylation of orotidine 5'-monophosphate (OMP) to uridine 5'-monophosphate (UMP). In Wolbachia pipientis subsp. Culex pipiens (strain wPip), this protein is Orotidine 5'-phosphate decarboxylase.